Here is a 684-residue protein sequence, read N- to C-terminus: GLLLFPTATKKLRRMWAFPSILLLSIVMIFSTXLSIQQINSSSIYQYVWSWTXDNDFSLEFGYLIDPLTSIMSMLXTTVGIMVLIYSDNYMAHDQGYLIFFAYMSFFSTSMLGLVTSSNLIQIYIFWELVGMCSYLLIGFWFTRPSAANACQKAFVTNRVGDFGLLLGILGFYWITGSFEFQDLFEIFNNLIYNNQVNSPFVTLCAALLFAGAVAKSAQFPLHVWLPDAMEGPTPISALIHAATMVAAGIFLVARLLPLFIVIPYIMNFISLIGIITVLLGATLALAQKDIKRGLAYSTMSQLXYMMLALGMGSYRSALFHLITHAYSKALLFLGSGSVIHSMETIVGYSPDKSQNMVLMGGLRKHVPITKTSFLLGTLSLCGIPPLACFWSKDEILNESWLYSPIFAIIAWATAGLTAFYMFRIYLLTFEGHLNVHFQNYSGNQNASLYSISLWGKGCSKRINKNFLLLKMNNNESSSFFSKNTYRSDENVRKRNRGRPFINIVDFYNQKSFSYPYESDNTMLFPLLVLVLFTLFVGILGIPFNQEGRDLDILSKWLAPSINLLHQKSEDSTDWYEFLKNAIFSVSIASFGIFLASXLYKPIYSSFKNFDLINLFVKTGPKRSRWDKIINILYXWSYXRAYIDTFYTTSXTGAIRGLAQLTDFFDRRVIDGITNGVGVMSFFV.

14 consecutive transmembrane segments (helical) span residues 16–36 (WAFP…XLSI), 65–85 (IDPL…MVLI), 96–116 (GYLI…GLVT), 123–143 (IYIF…FWFT), 161–181 (GDFG…SFEF), 206–226 (AALL…HVWL), 234–254 (TPIS…FLVA), 256–276 (LLPL…IGII), 303–323 (LXYM…FHLI), 330–350 (ALLF…VGYS), 372–392 (TSFL…CFWS), 401–421 (WLYS…TAFY), 524–544 (LFPL…GIPF), and 583–603 (IFSV…YKPI).

It belongs to the complex I subunit 5 family. NDH is composed of at least 16 different subunits, 5 of which are encoded in the nucleus.

It localises to the plastid. The protein localises to the chloroplast thylakoid membrane. It carries out the reaction a plastoquinone + NADH + (n+1) H(+)(in) = a plastoquinol + NAD(+) + n H(+)(out). It catalyses the reaction a plastoquinone + NADPH + (n+1) H(+)(in) = a plastoquinol + NADP(+) + n H(+)(out). Its function is as follows. NDH shuttles electrons from NAD(P)H:plastoquinone, via FMN and iron-sulfur (Fe-S) centers, to quinones in the photosynthetic chain and possibly in a chloroplast respiratory chain. The immediate electron acceptor for the enzyme in this species is believed to be plastoquinone. Couples the redox reaction to proton translocation, and thus conserves the redox energy in a proton gradient. The chain is NAD(P)H-quinone oxidoreductase subunit 5, chloroplastic (ndhF) from Sesamum indicum (Oriental sesame).